Consider the following 733-residue polypeptide: Polyribonucleotide nucleotidyltransferase (733 aa).

Mg(2+) is bound by residues aspartate 488 and aspartate 494. The region spanning 555–614 (PRIEVMNIAVDKIRDVIGTGGKVIREIVEQTGAKINIEDDGTIRIASADAKTIEAAKRWI) is the KH domain. Residues 624-692 (GVIYQGTVVK…ERGKVRLSMK (69 aa)) enclose the S1 motif domain. Positions 711–722 (EQEKYTEETHKS) are enriched in basic and acidic residues. A disordered region spans residues 711 to 733 (EQEKYTEETHKSENKRRRKKKEE). Basic residues predominate over residues 723–733 (ENKRRRKKKEE).

Belongs to the polyribonucleotide nucleotidyltransferase family. It depends on Mg(2+) as a cofactor.

The protein resides in the cytoplasm. It carries out the reaction RNA(n+1) + phosphate = RNA(n) + a ribonucleoside 5'-diphosphate. In terms of biological role, involved in mRNA degradation. Catalyzes the phosphorolysis of single-stranded polyribonucleotides processively in the 3'- to 5'-direction. The chain is Polyribonucleotide nucleotidyltransferase from Bartonella henselae (strain ATCC 49882 / DSM 28221 / CCUG 30454 / Houston 1) (Rochalimaea henselae).